We begin with the raw amino-acid sequence, 35 residues long: Photosystem II reaction center protein T (35 aa).

The chain crosses the membrane as a helical span at residues 3 to 23; the sequence is ALVYTFLLVSTLGIIFFAIFF.

This sequence belongs to the PsbT family. As to quaternary structure, PSII is composed of 1 copy each of membrane proteins PsbA, PsbB, PsbC, PsbD, PsbE, PsbF, PsbH, PsbI, PsbJ, PsbK, PsbL, PsbM, PsbT, PsbY, PsbZ, Psb30/Ycf12, at least 3 peripheral proteins of the oxygen-evolving complex and a large number of cofactors. It forms dimeric complexes.

The protein localises to the plastid. It is found in the chloroplast thylakoid membrane. Found at the monomer-monomer interface of the photosystem II (PS II) dimer, plays a role in assembly and dimerization of PSII. PSII is a light-driven water plastoquinone oxidoreductase, using light energy to abstract electrons from H(2)O, generating a proton gradient subsequently used for ATP formation. The protein is Photosystem II reaction center protein T of Gunnera chilensis (Chilean rhubarb).